Consider the following 475-residue polypeptide: ATP synthase subunit beta, chloroplastic (475 aa).

Residue 156–163 (GGAGVGKT) coordinates ATP.

The protein belongs to the ATPase alpha/beta chains family. In terms of assembly, F-type ATPases have 2 components, CF(1) - the catalytic core - and CF(0) - the membrane proton channel. CF(1) has five subunits: alpha(3), beta(3), gamma(1), delta(1), epsilon(1). CF(0) has four main subunits: a(1), b(1), b'(1) and c(9-12).

It is found in the plastid. The protein resides in the chloroplast thylakoid membrane. The enzyme catalyses ATP + H2O + 4 H(+)(in) = ADP + phosphate + 5 H(+)(out). Its function is as follows. Produces ATP from ADP in the presence of a proton gradient across the membrane. The catalytic sites are hosted primarily by the beta subunits. The polypeptide is ATP synthase subunit beta, chloroplastic (Trieres chinensis (Marine centric diatom)).